A 27-amino-acid chain; its full sequence is Cruzioseptin-14 (27 aa).

In terms of tissue distribution, expressed by the skin glands.

The protein localises to the secreted. Has antimicrobial activity. The protein is Cruzioseptin-14 of Cruziohyla calcarifer (Splendid leaf frog).